The sequence spans 828 residues: Phenylalanine--tRNA ligase beta subunit (828 aa).

A tRNA-binding domain is found at 44–155 (GPVDGPLTVG…GTAEPGADGA (112 aa)). The B5 domain occupies 411 to 486 (WSPPAIQMPA…RLEGLEVIGS (76 aa)). Residues Asp-464, Asp-470, Glu-473, and Glu-474 each contribute to the Mg(2+) site. Residues 734–827 (SPFPAVFQDV…AAEAVGAELR (94 aa)) enclose the FDX-ACB domain.

The protein belongs to the phenylalanyl-tRNA synthetase beta subunit family. Type 1 subfamily. Tetramer of two alpha and two beta subunits. It depends on Mg(2+) as a cofactor.

It localises to the cytoplasm. It carries out the reaction tRNA(Phe) + L-phenylalanine + ATP = L-phenylalanyl-tRNA(Phe) + AMP + diphosphate + H(+). This is Phenylalanine--tRNA ligase beta subunit from Mycolicibacterium paratuberculosis (strain ATCC BAA-968 / K-10) (Mycobacterium paratuberculosis).